Consider the following 468-residue polypeptide: Argininosuccinate lyase (468 aa).

It belongs to the lyase 1 family. Argininosuccinate lyase subfamily.

Its subcellular location is the cytoplasm. It carries out the reaction 2-(N(omega)-L-arginino)succinate = fumarate + L-arginine. It participates in amino-acid biosynthesis; L-arginine biosynthesis; L-arginine from L-ornithine and carbamoyl phosphate: step 3/3. The protein is Argininosuccinate lyase of Cutibacterium acnes (strain DSM 16379 / KPA171202) (Propionibacterium acnes).